The sequence spans 113 residues: UPF0060 membrane protein Arth_4423 (113 aa).

4 consecutive transmembrane segments (helical) span residues 7–27 (VLLF…VWQA), 33–53 (AWWW…VATL), 62–82 (ILAA…MVFD), and 91–111 (VIGS…PRGT).

It belongs to the UPF0060 family.

It localises to the cell membrane. This chain is UPF0060 membrane protein Arth_4423, found in Arthrobacter sp. (strain FB24).